The sequence spans 176 residues: NAD(P)H-quinone oxidoreductase subunit 6, chloroplastic (176 aa).

The next 5 helical transmembrane spans lie at 10 to 30 (ILLV…VLFT), 32 to 52 (PIYS…FYIP), 61 to 81 (AQLL…VMFM), 90 to 112 (FHLW…FSLI), and 152 to 172 (FYLP…GAIA).

This sequence belongs to the complex I subunit 6 family. In terms of assembly, NDH is composed of at least 16 different subunits, 5 of which are encoded in the nucleus.

It localises to the plastid. The protein resides in the chloroplast thylakoid membrane. It catalyses the reaction a plastoquinone + NADH + (n+1) H(+)(in) = a plastoquinol + NAD(+) + n H(+)(out). It carries out the reaction a plastoquinone + NADPH + (n+1) H(+)(in) = a plastoquinol + NADP(+) + n H(+)(out). Its function is as follows. NDH shuttles electrons from NAD(P)H:plastoquinone, via FMN and iron-sulfur (Fe-S) centers, to quinones in the photosynthetic chain and possibly in a chloroplast respiratory chain. The immediate electron acceptor for the enzyme in this species is believed to be plastoquinone. Couples the redox reaction to proton translocation, and thus conserves the redox energy in a proton gradient. This is NAD(P)H-quinone oxidoreductase subunit 6, chloroplastic (ndhG) from Ceratophyllum demersum (Rigid hornwort).